Here is a 467-residue protein sequence, read N- to C-terminus: MELGKTQRVHIVGIGGAGMSAIAELLLKSGFSVSGSDLSTGDVTDRLTAHGAVIYKGHQEGQVADSDVVVYSSAIRSEENVELRAALKAGIPVIKRDEMLGELMRYKSGICISGTHGKTTTTAMIATMLLEAGESPTVMIGGISDYLKGSTVVGEGKYMVIEADEYDRAFLKLTPTIAILNSLESEHMDTYGTLEELKQAFITFANKVPFYGRVICCVDWAEIRKIIPSLNRRYITFGIEEPADVMATDIVLLEGSTTFTIRAFGIEYPNVRIHVPGKHNVLNALAAFSTGLELGISPERLIAGLGCYSGMRRRFQVKYSGNNGLMVVDDYAHHPSEVKATVKAAKDGWQHSKVVAVFQPHLFSRTRDFADEYGWALSRADEVYIADIYPAREKAADHPGVTGELVANAVRKAGGKQVHFVNGMEELYTALQTHVAPQTLLLCMGAGDITHLATKVAVFCKEHNADH.

114–120 (GTHGKTT) is a binding site for ATP.

Belongs to the MurCDEF family.

Its subcellular location is the cytoplasm. It carries out the reaction UDP-N-acetyl-alpha-D-muramate + L-alanine + ATP = UDP-N-acetyl-alpha-D-muramoyl-L-alanine + ADP + phosphate + H(+). It participates in cell wall biogenesis; peptidoglycan biosynthesis. Functionally, cell wall formation. This chain is UDP-N-acetylmuramate--L-alanine ligase, found in Chlorobium chlorochromatii (strain CaD3).